The sequence spans 72 residues: Translation initiation factor IF-1 (72 aa).

An S1-like domain is found at 1 to 72; it reads MAKDDVIEVE…TRGRITYRFK (72 aa).

This sequence belongs to the IF-1 family. As to quaternary structure, component of the 30S ribosomal translation pre-initiation complex which assembles on the 30S ribosome in the order IF-2 and IF-3, IF-1 and N-formylmethionyl-tRNA(fMet); mRNA recruitment can occur at any time during PIC assembly.

The protein localises to the cytoplasm. Functionally, one of the essential components for the initiation of protein synthesis. Stabilizes the binding of IF-2 and IF-3 on the 30S subunit to which N-formylmethionyl-tRNA(fMet) subsequently binds. Helps modulate mRNA selection, yielding the 30S pre-initiation complex (PIC). Upon addition of the 50S ribosomal subunit IF-1, IF-2 and IF-3 are released leaving the mature 70S translation initiation complex. This chain is Translation initiation factor IF-1, found in Streptococcus pneumoniae serotype 2 (strain D39 / NCTC 7466).